The sequence spans 380 residues: ATPase ASNA1 homolog (380 aa).

48 to 55 (KGGVGKTT) is an ATP binding site. The active site involves Asp-77. Residues Glu-248 and Asn-275 each coordinate ATP.

It belongs to the arsA ATPase family. Homodimer.

It is found in the cytoplasm. Its subcellular location is the endoplasmic reticulum. ATPase required for the post-translational delivery of tail-anchored (TA) proteins to the endoplasmic reticulum. Recognizes and selectively binds the transmembrane domain of TA proteins in the cytosol. This complex then targets to the endoplasmic reticulum by membrane-bound receptors, where the tail-anchored protein is released for insertion. This process is regulated by ATP binding and hydrolysis. ATP binding drives the homodimer towards the closed dimer state, facilitating recognition of newly synthesized TA membrane proteins. ATP hydrolysis is required for insertion. Subsequently, the homodimer reverts towards the open dimer state, lowering its affinity for the membrane-bound receptor, and returning it to the cytosol to initiate a new round of targeting. The sequence is that of ATPase ASNA1 homolog from Plasmodium yoelii yoelii.